The primary structure comprises 469 residues: 6-phosphogluconate dehydrogenase, NADP(+)-dependent, decarboxylating (469 aa).

Residues 10–15, 33–35, 74–76, and N102 contribute to the NADP(+) site; these read GLAVMG, NRS, and VKA. Substrate-binding positions include N102 and 128–130; that span reads SGG. The active-site Proton acceptor is K182. 185-186 contacts substrate; the sequence is HN. E189 (proton donor) is an active-site residue. Substrate contacts are provided by Y190, K260, R287, R446, and H452.

This sequence belongs to the 6-phosphogluconate dehydrogenase family. As to quaternary structure, homodimer.

The catalysed reaction is 6-phospho-D-gluconate + NADP(+) = D-ribulose 5-phosphate + CO2 + NADPH. It functions in the pathway carbohydrate degradation; pentose phosphate pathway; D-ribulose 5-phosphate from D-glucose 6-phosphate (oxidative stage): step 3/3. In terms of biological role, catalyzes the oxidative decarboxylation of 6-phosphogluconate to ribulose 5-phosphate and CO(2), with concomitant reduction of NADP to NADPH. Is the predominant 6-P-gluconate dehydrogenase isoenzyme in B.subtilis during growth on glucose and gluconate. The protein is 6-phosphogluconate dehydrogenase, NADP(+)-dependent, decarboxylating (gndA) of Bacillus subtilis (strain 168).